We begin with the raw amino-acid sequence, 435 residues long: Ribosomal protein uS12 methylthiotransferase RimO (435 aa).

An MTTase N-terminal domain is found at 3–113 (HKVGFVSLGC…VVNAVHQHLP (111 aa)). [4Fe-4S] cluster contacts are provided by Cys-12, Cys-48, Cys-77, Cys-144, Cys-148, and Cys-151. One can recognise a Radical SAM core domain in the interval 130 to 367 (LTPRHYAYLK…MQVQAEISRN (238 aa)). The 66-residue stretch at 370-435 (KNKIGSTQTV…DDYDLYASLV (66 aa)) folds into the TRAM domain.

This sequence belongs to the methylthiotransferase family. RimO subfamily. [4Fe-4S] cluster serves as cofactor.

The protein resides in the cytoplasm. It catalyses the reaction L-aspartate(89)-[ribosomal protein uS12]-hydrogen + (sulfur carrier)-SH + AH2 + 2 S-adenosyl-L-methionine = 3-methylsulfanyl-L-aspartate(89)-[ribosomal protein uS12]-hydrogen + (sulfur carrier)-H + 5'-deoxyadenosine + L-methionine + A + S-adenosyl-L-homocysteine + 2 H(+). Its function is as follows. Catalyzes the methylthiolation of an aspartic acid residue of ribosomal protein uS12. The polypeptide is Ribosomal protein uS12 methylthiotransferase RimO (Legionella pneumophila (strain Lens)).